Here is a 549-residue protein sequence, read N- to C-terminus: Cytoplasmic trehalase (549 aa).

Substrate contacts are provided by residues R168, 175 to 176, N212, 221 to 223, 292 to 294, and G324; these read WD, RSQ, and RDE. Active-site proton donor/acceptor residues include D326 and E509. E525 lines the substrate pocket.

The protein belongs to the glycosyl hydrolase 37 family. As to quaternary structure, monomer.

Its subcellular location is the cytoplasm. It carries out the reaction alpha,alpha-trehalose + H2O = alpha-D-glucose + beta-D-glucose. It participates in glycan degradation; trehalose degradation; D-glucose from alpha,alpha-trehalose: step 1/1. Hydrolyzes trehalose to glucose. Could be involved, in cells returning to low osmolarity conditions, in the utilization of the accumulated cytoplasmic trehalose, which was synthesized in response to high osmolarity. This is Cytoplasmic trehalase from Shigella flexneri serotype 5b (strain 8401).